The sequence spans 139 residues: NADH dehydrogenase [ubiquinone] 1 alpha subcomplex subunit MCI4 (139 aa).

Belongs to the complex I NDUFA5 subunit family.

The protein resides in the mitochondrion inner membrane. Functionally, accessory subunit of the mitochondrial membrane respiratory chain NADH dehydrogenase (Complex I), that is believed not to be involved in catalysis. Complex I functions in the transfer of electrons from NADH to the respiratory chain. The immediate electron acceptor for the enzyme is believed to be ubiquinone. Involved in osmotic and oxidative resistance, yeast to hypha transition and the ability to damage and invade oral epithelial cells. The protein is NADH dehydrogenase [ubiquinone] 1 alpha subcomplex subunit MCI4 of Candida albicans (strain SC5314 / ATCC MYA-2876) (Yeast).